We begin with the raw amino-acid sequence, 120 residues long: Flagellar protein FliT (120 aa).

Residues 1 to 50 (MERHQHLLSEYQQILTLSEQMLMLATVENWNALVDLEMTYLKAVENTANI) form a required for homodimerization region. The fliD binding stretch occupies residues 60 to 98 (LQELLRQKLRSILENEIEIKRLLQRRLDKLSELVGQSTR).

It belongs to the FliT family. Homodimer. Interacts with FliD and FlhC.

It localises to the cytoplasm. It is found in the cytosol. Its function is as follows. Dual-function protein that regulates the transcription of class 2 flagellar operons and that also acts as an export chaperone for the filament-capping protein FliD. As a transcriptional regulator, acts as an anti-FlhDC factor; it directly binds FlhC, thus inhibiting the binding of the FlhC/FlhD complex to class 2 promoters, resulting in decreased expression of class 2 flagellar operons. As a chaperone, effects FliD transition to the membrane by preventing its premature polymerization, and by directing it to the export apparatus. The chain is Flagellar protein FliT from Yersinia pestis bv. Antiqua (strain Antiqua).